Here is a 328-residue protein sequence, read N- to C-terminus: D-cysteine desulfhydrase (328 aa).

At Lys51 the chain carries N6-(pyridoxal phosphate)lysine.

Belongs to the ACC deaminase/D-cysteine desulfhydrase family. As to quaternary structure, homodimer. The cofactor is pyridoxal 5'-phosphate.

The catalysed reaction is D-cysteine + H2O = hydrogen sulfide + pyruvate + NH4(+) + H(+). Catalyzes the alpha,beta-elimination reaction of D-cysteine and of several D-cysteine derivatives. It could be a defense mechanism against D-cysteine. This is D-cysteine desulfhydrase from Shigella flexneri serotype 5b (strain 8401).